A 323-amino-acid polypeptide reads, in one-letter code: Phospho-N-acetylmuramoyl-pentapeptide-transferase (323 aa).

Transmembrane regions (helical) follow at residues Ile-12–Pro-32, Pro-58–Gly-78, Ala-84–Leu-104, Met-120–Thr-140, Ile-151–Ala-171, Gly-177–Ser-197, Leu-200–Leu-220, Val-229–Leu-250, and Lys-303–Leu-323.

The protein belongs to the glycosyltransferase 4 family. MraY subfamily. Requires Mg(2+) as cofactor.

It is found in the cell membrane. It carries out the reaction UDP-N-acetyl-alpha-D-muramoyl-L-alanyl-gamma-D-glutamyl-meso-2,6-diaminopimeloyl-D-alanyl-D-alanine + di-trans,octa-cis-undecaprenyl phosphate = di-trans,octa-cis-undecaprenyl diphospho-N-acetyl-alpha-D-muramoyl-L-alanyl-D-glutamyl-meso-2,6-diaminopimeloyl-D-alanyl-D-alanine + UMP. The protein operates within cell wall biogenesis; peptidoglycan biosynthesis. Its function is as follows. Catalyzes the initial step of the lipid cycle reactions in the biosynthesis of the cell wall peptidoglycan: transfers peptidoglycan precursor phospho-MurNAc-pentapeptide from UDP-MurNAc-pentapeptide onto the lipid carrier undecaprenyl phosphate, yielding undecaprenyl-pyrophosphoryl-MurNAc-pentapeptide, known as lipid I. This Clostridium perfringens (strain SM101 / Type A) protein is Phospho-N-acetylmuramoyl-pentapeptide-transferase.